A 1040-amino-acid polypeptide reads, in one-letter code: BEM1-interacting protein 2 (1040 aa).

The segment at 1-39 (MSNDREVPTLSQLNTTVSRDKDVSDTLSPDFDSKGSATG) is disordered. Residues 8–17 (PTLSQLNTTV) are compositionally biased toward polar residues. Phosphoserine is present on residues Ser-18, Ser-24, and Ser-28. The 65-residue stretch at 43 to 107 (GNFPMYIAIN…PVVFTQKITV (65 aa)) folds into the SH3 domain. The region spanning 266 to 330 (WSPEEITAYF…FKEIEKIKEA (65 aa)) is the SAM domain. 3 disordered regions span residues 365 to 412 (YRGH…SQEA), 437 to 478 (VSPR…WQSP), and 491 to 744 (IDQY…ARPV). Over residues 372 to 397 (TSQSLEDLPSQQNFIPTPRNTRNSSA) the composition is skewed to polar residues. The span at 444 to 457 (KPPSYPSPAQPPKS) shows a compositional bias: pro residues. Ser-450 carries the post-translational modification Phosphoserine. The span at 459 to 478 (LLNNTRTSPSPAQLYSWQSP) shows a compositional bias: polar residues. A compositionally biased stretch (low complexity) spans 495 to 505 (SSSDSNFNSRS). A phosphoserine mark is found at Ser-519, Ser-523, and Ser-546. Residues 557–570 (SSDRKSSCSSHEEE) are compositionally biased toward basic and acidic residues. Positions 573–598 (QETMNTFERPTSSIYADGSTIASISN) are enriched in polar residues. Residues 600 to 609 (KLAHEKEGKK) show a composition bias toward basic and acidic residues. The span at 632-648 (LKRSSSASRTSSFKKSS) shows a compositional bias: low complexity. Residue Ser-652 is modified to Phosphoserine. Residues 654–684 (FRQQFTDNAARSSSPEENPITSMPSEKNSSP) are compositionally biased toward polar residues. Over residues 690–701 (SSKKSRSKRRSV) the composition is skewed to basic residues. Over residues 702 to 732 (SAKEAEIFTETVKDDKNKRSASEAIKGETLK) the composition is skewed to basic and acidic residues. The PH domain maps to 768–887 (DADFSGWMSK…WMAALIKTTI (120 aa)). Residues 943 to 957 (QLQQQQHDNNQGQAD) are compositionally biased toward low complexity. 2 disordered regions span residues 943-986 (QLQQ…NNTT) and 1007-1040 (VARN…TDKI). The span at 973-986 (TISTPNLSSANNTT) shows a compositional bias: polar residues. The span at 1015 to 1024 (GTEKKGKFST) shows a compositional bias: basic and acidic residues.

In terms of assembly, interacts with BEM1. Interacts with TOS7.

The protein resides in the bud. It localises to the bud neck. Protein involved in bud formation. Functions redundantly with BOI1 to promote the fusion of secretory vesicles with the plasma membrane at sites of polarized growth. Acts as an abscission inhibitor during cytokinesis in response to chromatin bridges. The chain is BEM1-interacting protein 2 from Saccharomyces cerevisiae (strain ATCC 204508 / S288c) (Baker's yeast).